The sequence spans 286 residues: Enoyl-CoA hydratase ChsH3 (286 aa).

A MaoC-like domain is found at 163 to 271; sequence APERAPDLQV…RLVASVVAPT (109 aa). Residues aspartate 189 and histidine 194 contribute to the active site.

The protein belongs to the enoyl-CoA hydratase/isomerase family. As to quaternary structure, homodimer.

The enzyme catalyses (22E)-3-oxochola-4,22-dien-24-oyl-CoA + H2O = (22S)-hydroxy-3-oxo-chol-4-ene-24-oyl-CoA. The protein operates within steroid metabolism; cholesterol degradation. In terms of biological role, degradation of the cholesterol side chain involves 3 multistep beta-oxidation cycles, this is involved in the second cycle. Hydrates bulky steroid enoyl-CoA esters, has highest activity with 3-OCDO-CoA (3-oxochol-4,22-dien-24-oyl-CoA) making (22S)-HOCO-CoA, followed by octenoyl-CoA, with weaker activity on 3-OCDS-CoA (3-oxocholest-4,24-dien-26-oyl-CoA) and none on 3-OPDC-CoA (3-oxo-pregna-4,17-diene-20- carboxyl-CoA). Hydrates the same substrate as EchA19, but the 2 enzymes make different stereoisomers of the product. This chain is Enoyl-CoA hydratase ChsH3, found in Mycobacterium tuberculosis (strain ATCC 25618 / H37Rv).